Here is a 510-residue protein sequence, read N- to C-terminus: Calmodulin-binding receptor-like cytoplasmic kinase 3 (510 aa).

The N-terminal stretch at 1–30 (MGGDDLSFTRLVITALFGLLMLLQIKETSA) is a signal peptide. Residues 166-178 (VSSFEMSPSSEKI) show a composition bias toward polar residues. The segment at 166-209 (VSSFEMSPSSEKIPQSPFRAPPSPSRVPQSPSRYAMSPRPSRLG) is disordered. Thr214 carries the phosphothreonine modification. A Protein kinase domain is found at 225 to 499 (FADSHQIGEG…MEAVGKQLWA (275 aa)). Residues 231-239 (IGEGGFGVV) and Lys253 each bind ATP. Residues 240–265 (FKGVLDDGQVVAIKRAKKEHFENLRT) form a caM-binding region. Asp350 (proton acceptor) is an active-site residue. Ser354 carries the post-translational modification Phosphoserine. A phosphothreonine mark is found at Thr386 and Thr391. Phosphotyrosine is present on Tyr399.

This sequence belongs to the protein kinase superfamily. Ser/Thr protein kinase family. Interacts with calmodulin (CaM) in a Ca(2+)-dependent manner.

It is found in the cytoplasm. The catalysed reaction is L-seryl-[protein] + ATP = O-phospho-L-seryl-[protein] + ADP + H(+). The enzyme catalyses L-threonyl-[protein] + ATP = O-phospho-L-threonyl-[protein] + ADP + H(+). The polypeptide is Calmodulin-binding receptor-like cytoplasmic kinase 3 (CRCK3) (Arabidopsis thaliana (Mouse-ear cress)).